Consider the following 1024-residue polypeptide: PH and SEC7 domain-containing protein 1 (1024 aa).

A disordered region spans residues 67–96; that stretch reads CTPLRAPPSPHIAPSPWGPSSPTGQPPPGA. Residues 71-95 show a composition bias toward pro residues; it reads RAPPSPHIAPSPWGPSSPTGQPPPG. S126 and S156 each carry phosphoserine. 4 disordered regions span residues 154–195, 250–277, 307–401, and 434–536; these read STSD…LPNG, PSSG…VAVG, REEA…GPDS, and PTQS…LDST. The span at 348–365 shows a compositional bias: acidic residues; the sequence is NEDDEAGGEEDVDDEVFE. Residues 445–463 are compositionally biased toward pro residues; sequence PPQPPAPRPDPPAPAPLAP. Positions 495–507 are enriched in basic and acidic residues; it reads PRKELPSPSHSED. One can recognise an SEC7 domain in the interval 512–706; that stretch reads GAAPLGSEPP…KALYSSIKNE (195 aa). S720 is modified (phosphoserine). Residues 756–869 enclose the PH domain; the sequence is AVYKHGALVR…WITRINVVAA (114 aa). 2 coiled-coil regions span residues 898–924 and 956–983; these read LSQE…HRAA and AALL…AGST. Residues 976–1024 form a disordered region; sequence ALAQAGSTEDGCPPPHSSPSLRPKPTSQPRAQRPGSETRAGAGSTRPKP.

This sequence belongs to the PSD family. As to quaternary structure, interacts with ACTN1. Interacts (ARF6-bound form) with KCNK1; does not interact with KCNK1 in the absence of ARF6. In terms of tissue distribution, highest expression detected in brain and some expression detected also in uterus, stomach, ovary and intestine, with isoform 2 being expressed at the highest levels. In the brain, isoform 1 is highly expressed in the strata oriens, radiatum, lacunosum-moleculare of the hippocampal CA1-3 regions and the dentate molecular layer of the hippocampal formation, with lower levels detected in the neuronal cell layers and the stratum lucidum (at protein level). Not detected in tongue, thymus, spleen, lung, heart, liver and kidney.

It localises to the cell membrane. It is found in the cell projection. Its subcellular location is the ruffle. The protein localises to the ruffle membrane. The protein resides in the cleavage furrow. Functionally, guanine nucleotide exchange factor for ARF6. Isoform 2 and isoform 3 induce cytoskeletal remodeling, but lead to distinct morphological changes in HeLa cells: isoform 2 induces cell elongation and formation of actin-rich protrusions, whereas isoform 3 promotes the formation of membrane ruffles and loss of stress fibers. This chain is PH and SEC7 domain-containing protein 1 (Psd), found in Mus musculus (Mouse).